A 493-amino-acid polypeptide reads, in one-letter code: Cholesteryl ester transfer protein (493 aa).

The first 17 residues, 1-17, serve as a signal peptide directing secretion; the sequence is MLAATVLTLALLGNAHA. N-linked (GlcNAc...) (complex) asparagine glycosylation occurs at N105. Residues C160 and C201 are joined by a disulfide bond. N-linked (GlcNAc...) asparagine glycosylation is found at N257, N358, and N413.

The protein belongs to the BPI/LBP/Plunc superfamily. BPI/LBP family. Expressed by the liver and secreted in plasma.

The protein resides in the secreted. It carries out the reaction cholesteryl (9Z-octadecenoate)(in) = cholesteryl (9Z-octadecenoate)(out). It catalyses the reaction 1,2,3-tri-(9Z-octadecenoyl)-glycerol(in) = 1,2,3-tri-(9Z-octadecenoyl)-glycerol(out). The catalysed reaction is cholesteryl (9Z,12Z)-octadecadienoate(in) = cholesteryl (9Z,12Z)-octadecadienoate(out). In terms of biological role, involved in the transfer of neutral lipids, including cholesteryl ester and triglyceride, among lipoprotein particles. Allows the net movement of cholesteryl ester from high density lipoproteins/HDL to triglyceride-rich very low density lipoproteins/VLDL, and the equimolar transport of triglyceride from VLDL to HDL. Regulates the reverse cholesterol transport, by which excess cholesterol is removed from peripheral tissues and returned to the liver for elimination. This is Cholesteryl ester transfer protein from Homo sapiens (Human).